Here is a 258-residue protein sequence, read N- to C-terminus: Acetylglutamate kinase (258 aa).

Residues 44–45, Arg-66, and Asn-158 contribute to the substrate site; that span reads GG. Residues 181 to 186 and 209 to 211 contribute to the ATP site; these read DISSIL and IIT.

This sequence belongs to the acetylglutamate kinase family. ArgB subfamily. Homodimer.

The protein resides in the cytoplasm. It catalyses the reaction N-acetyl-L-glutamate + ATP = N-acetyl-L-glutamyl 5-phosphate + ADP. It participates in amino-acid biosynthesis; L-arginine biosynthesis; N(2)-acetyl-L-ornithine from L-glutamate: step 2/4. Its function is as follows. Catalyzes the ATP-dependent phosphorylation of N-acetyl-L-glutamate. The protein is Acetylglutamate kinase of Buchnera aphidicola subsp. Schizaphis graminum (strain Sg).